Reading from the N-terminus, the 414-residue chain is Tryptophan synthase beta chain (414 aa).

The disordered stretch occupies residues 1-26; sequence MVSTFSRKNQNYKKDDLNQPSKDGRF. Positions 12–26 are enriched in basic and acidic residues; the sequence is YKKDDLNQPSKDGRF. Lys-109 bears the N6-(pyridoxal phosphate)lysine mark.

The protein belongs to the TrpB family. As to quaternary structure, tetramer of two alpha and two beta chains. Pyridoxal 5'-phosphate is required as a cofactor.

It catalyses the reaction (1S,2R)-1-C-(indol-3-yl)glycerol 3-phosphate + L-serine = D-glyceraldehyde 3-phosphate + L-tryptophan + H2O. Its pathway is amino-acid biosynthesis; L-tryptophan biosynthesis; L-tryptophan from chorismate: step 5/5. Functionally, the beta subunit is responsible for the synthesis of L-tryptophan from indole and L-serine. This is Tryptophan synthase beta chain from Prochlorococcus marinus (strain MIT 9215).